A 311-amino-acid chain; its full sequence is MALPILLDCDPGHDDAIAIVLALASPELDVKAITSSAGNQTPEKTLRNVLRMLTLLNRTDIPVASGAVKPLMRNLIIADNVHGESGLDGPALPEPTFAPQNCTAVELMAKTLCESEEPVTIVSTGPQTNVALLLNSHPELHSKIARIVIMGGAMGLGNWTPAAEFNIYVDPEAAEIVFQSGIPVVMAGLDVTHKAQIHVEDTERFRAIGNPVSTIVAELLDFFLEYHKDEKWGFVGAPLHDPCTIAWLLKPELFTTVERWVGVETQGKYTQGMTVVDYYYLTGNKPNATVMVDVDRQGFVDLLADRLKFYA.

Histidine 240 is a catalytic residue.

The protein belongs to the IUNH family. RihA subfamily.

Functionally, hydrolyzes with equal efficiency cytidine or uridine to ribose and cytosine or uracil, respectively. The protein is Pyrimidine-specific ribonucleoside hydrolase RihA of Escherichia coli O81 (strain ED1a).